A 185-amino-acid polypeptide reads, in one-letter code: MNLINSTKIFSSLMIASVENNTAIFSLNTDILETNLINLLVIFFLLIYQGRPFFTALLEERRKTVLDKIKKSENSYNEALEKLKEAKSKLAQAELAAKQIYEEAEAVAESIKKTGLAQLEKDIKRIEETTQASINTQQLSVITYLRQQVALLALRRVVSQLKNYLKPELHSQFIDRKILQLRKQK.

A helical transmembrane segment spans residues 36 to 58 (LINLLVIFFLLIYQGRPFFTALL).

Belongs to the ATPase B chain family. F-type ATPases have 2 components, F(1) - the catalytic core - and F(0) - the membrane proton channel. F(1) has five subunits: alpha(3), beta(3), gamma(1), delta(1), epsilon(1). F(0) has four main subunits: a(1), b(1), b'(1) and c(10-14). The alpha and beta chains form an alternating ring which encloses part of the gamma chain. F(1) is attached to F(0) by a central stalk formed by the gamma and epsilon chains, while a peripheral stalk is formed by the delta, b and b' chains.

The protein resides in the plastid. Its subcellular location is the cyanelle thylakoid membrane. F(1)F(0) ATP synthase produces ATP from ADP in the presence of a proton or sodium gradient. F-type ATPases consist of two structural domains, F(1) containing the extramembraneous catalytic core and F(0) containing the membrane proton channel, linked together by a central stalk and a peripheral stalk. During catalysis, ATP synthesis in the catalytic domain of F(1) is coupled via a rotary mechanism of the central stalk subunits to proton translocation. Its function is as follows. Component of the F(0) channel, it forms part of the peripheral stalk, linking F(1) to F(0). This chain is ATP synthase subunit b, cyanelle, found in Cyanophora paradoxa.